We begin with the raw amino-acid sequence, 453 residues long: Putative sodium-coupled neutral amino acid transporter 11 (453 aa).

Residues 1-10 are compositionally biased toward polar residues; the sequence is MSYQQPQLSG. The interval 1–34 is disordered; that stretch reads MSYQQPQLSGPLQRETDSSDRESLISGHEHGGKS. Over residues 14–32 the composition is skewed to basic and acidic residues; the sequence is RETDSSDRESLISGHEHGG. A run of 11 helical transmembrane segments spans residues 39–59, 66–86, 106–126, 150–170, 179–199, 222–242, 262–282, 299–319, 337–357, 359–379, and 398–418; these read AVFNVVNSVIGSGIIGLPYSM, LGILLLFLVSYITDFSLVLLI, GFPGYLLLSTLQFMYPFIAMI, GWFISRHFIIVVSTVTCTLPL, LGKISFISTILTTVILGIVMT, AIQAIGVMSFAFICHHNCFLV, ILVSVFICVLFATCGYFTFTG, VTFGRFCYGITVILTYPIECF, VFHTVLAVLIVTAATLVSLMI, CLGIVLELNGVLCAAPLIFII, and IMACVMFPVGAVVMVVGFVMA. N-linked (GlcNAc...) asparagine glycosylation is found at N438 and N443.

This sequence belongs to the amino acid/polyamine transporter 2 family.

Its subcellular location is the membrane. In terms of biological role, putative sodium-dependent amino acid/proton antiporter. In Mus musculus (Mouse), this protein is Putative sodium-coupled neutral amino acid transporter 11 (Slc38a11).